The following is a 70-amino-acid chain: Large ribosomal subunit protein bL32 (70 aa).

Positions 1 to 19 are enriched in basic residues; that stretch reads MAVPKKKTSPSRRGMRRSH. The tract at residues 1-21 is disordered; the sequence is MAVPKKKTSPSRRGMRRSHQA.

Belongs to the bacterial ribosomal protein bL32 family.

In Granulibacter bethesdensis (strain ATCC BAA-1260 / CGDNIH1), this protein is Large ribosomal subunit protein bL32.